The following is a 354-amino-acid chain: Cyclin-D1-2 (354 aa).

2 disordered regions span residues 37-74 (FFQQLQGPAPAVSSSPSTTTATAPAAAGSCDDGGEEEE) and 331-354 (TTATTAVSSEEVVSSSPPSKRRKM). 2 stretches are compositionally biased toward low complexity: residues 44-66 (PAPAVSSSPSTTTATAPAAAGSC) and 331-346 (TTATTAVSSEEVVSSS).

It belongs to the cyclin family. Cyclin D subfamily.

This chain is Cyclin-D1-2 (CYCD1-2), found in Oryza sativa subsp. japonica (Rice).